The following is a 189-amino-acid chain: UPF0149 protein VF_2102 (189 aa).

This sequence belongs to the UPF0149 family.

In Aliivibrio fischeri (strain ATCC 700601 / ES114) (Vibrio fischeri), this protein is UPF0149 protein VF_2102.